An 89-amino-acid polypeptide reads, in one-letter code: Small ribosomal subunit protein uS17 (89 aa).

The protein belongs to the universal ribosomal protein uS17 family. Part of the 30S ribosomal subunit.

In terms of biological role, one of the primary rRNA binding proteins, it binds specifically to the 5'-end of 16S ribosomal RNA. This chain is Small ribosomal subunit protein uS17, found in Xanthomonas campestris pv. campestris (strain 8004).